The following is a 75-amino-acid chain: ATP synthase subunit c (75 aa).

The next 2 helical transmembrane spans lie at 4-24 and 54-74; these read GLIA…GLGQ and AVAE…MFAF.

This sequence belongs to the ATPase C chain family. F-type ATPases have 2 components, F(1) - the catalytic core - and F(0) - the membrane proton channel. F(1) has five subunits: alpha(3), beta(3), gamma(1), delta(1), epsilon(1). F(0) has three main subunits: a(1), b(2) and c(10-14). The alpha and beta chains form an alternating ring which encloses part of the gamma chain. F(1) is attached to F(0) by a central stalk formed by the gamma and epsilon chains, while a peripheral stalk is formed by the delta and b chains.

It is found in the cell membrane. F(1)F(0) ATP synthase produces ATP from ADP in the presence of a proton or sodium gradient. F-type ATPases consist of two structural domains, F(1) containing the extramembraneous catalytic core and F(0) containing the membrane proton channel, linked together by a central stalk and a peripheral stalk. During catalysis, ATP synthesis in the catalytic domain of F(1) is coupled via a rotary mechanism of the central stalk subunits to proton translocation. In terms of biological role, key component of the F(0) channel; it plays a direct role in translocation across the membrane. A homomeric c-ring of between 10-14 subunits forms the central stalk rotor element with the F(1) delta and epsilon subunits. The sequence is that of ATP synthase subunit c from Mycoplasmopsis agalactiae (strain NCTC 10123 / CIP 59.7 / PG2) (Mycoplasma agalactiae).